The chain runs to 349 residues: MKLAVVSVVVILGVLVAWPVSAGRKDLPGAGGYGGDDDDDTKSLFPLDNLLSLNYYDRICPDFEKIVVTKVREWTKSDSSLGPALLRLIFHDCGVTGCDASVLLDYEGTERRSPASKTLRGFELIDDIKSEMEKSCPGKVSCADILTSASRAATVQLGGPYWPNVYGRRDSKHSYARDVEKVPSGRRDVTALLETFQSYGLNVLDLVVLSGAHTIGKASCGTIQSRLYNYNATSGSDPSIDAKYADYLQRRCRWASETVDLDPVTPAVFDNQYYINLQKHMGVLSTDQELVKDPRTAPLVKTFAEQSPQIFRQQFAVSMAKLVNVGVLTGEDRVGEIRKVCSKSNSRAY.

The N-terminal stretch at 1–22 (MKLAVVSVVVILGVLVAWPVSA) is a signal peptide. Cystine bridges form between C60-C136, C93-C98, C142-C341, and C220-C252. Catalysis depends on H91, which acts as the Proton acceptor. D92, V95, G97, D99, and S101 together coordinate Ca(2+). P183 contacts substrate. H213 contacts heme b. T214 is a Ca(2+) binding site. Residue N231 is glycosylated (N-linked (GlcNAc...) asparagine). Residues D262, T265, and D270 each coordinate Ca(2+).

It belongs to the peroxidase family. Classical plant (class III) peroxidase subfamily. The cofactor is heme b. Requires Ca(2+) as cofactor.

The protein resides in the secreted. It carries out the reaction 2 a phenolic donor + H2O2 = 2 a phenolic radical donor + 2 H2O. Functionally, removal of H(2)O(2), oxidation of toxic reductants, biosynthesis and degradation of lignin, suberization, auxin catabolism, response to environmental stresses such as wounding, pathogen attack and oxidative stress. These functions might be dependent on each isozyme/isoform in each plant tissue. The polypeptide is Peroxidase 7 (PER7) (Arabidopsis thaliana (Mouse-ear cress)).